The chain runs to 509 residues: Activin receptor type-1 (509 aa).

An N-terminal signal peptide occupies residues 1–20; it reads MVDGVMILPVLMMMAFPSPS. Over 21–123 the chain is Extracellular; the sequence is VEDEKPKVNQ…FPGTQNFHLE (103 aa). A glycan (N-linked (GlcNAc...) asparagine) is linked at Asn102. Residues 124–146 form a helical membrane-spanning segment; the sequence is VGLIILSVVFAVCLLACILGVAL. Residues 147–509 are Cytoplasmic-facing; sequence RKFKRRNQER…NSLDKLKTDC (363 aa). In terms of domain architecture, GS spans 178–207; the sequence is STLAELLDHSCTSGSGSGLPFLVQRTVARQ. The region spanning 208–502 is the Protein kinase domain; the sequence is ITLLECVGKG…KTLTKIDNSL (295 aa). Residues 214–222 and Lys235 contribute to the ATP site; that span reads VGKGRYGEV. The active-site Proton acceptor is the Asp336. Ser501 carries the post-translational modification Phosphoserine.

The protein belongs to the protein kinase superfamily. TKL Ser/Thr protein kinase family. TGFB receptor subfamily. Interacts with FKBP1A. Interacts with FCHO1. Interacts with CLU. Interacts with type II receptors AMHR2 and ACVR2A. Interacts with BMP7. Interacts with BMP9. Interacts with BMP6 (when glycosylated); the interaction may induce HAMP expression. Interacts with TSC22D1/TSC-22. Mg(2+) is required as a cofactor. It depends on Mn(2+) as a cofactor. In terms of tissue distribution, highly expressed in bone during developmental stages. Expressed in normal parenchymal cells, endothelial cells, fibroblasts and tumor-derived epithelial cells.

It localises to the membrane. The catalysed reaction is L-threonyl-[receptor-protein] + ATP = O-phospho-L-threonyl-[receptor-protein] + ADP + H(+). It catalyses the reaction L-seryl-[receptor-protein] + ATP = O-phospho-L-seryl-[receptor-protein] + ADP + H(+). Its function is as follows. Bone morphogenetic protein (BMP) type I receptor that is involved in a wide variety of biological processes, including bone, heart, cartilage, nervous, and reproductive system development and regulation. As a type I receptor, forms heterotetrameric receptor complexes with the type II receptors AMHR2, ACVR2A ors ACVR2B. Upon binding of ligands such as BMP7 or BMP9 to the heteromeric complexes, type II receptors transphosphorylate ACVR1 intracellular domain. In turn, ACVR1 kinase domain is activated and subsequently phosphorylates SMAD1/5/8 proteins that transduce the signal. In addition to its role in mediating BMP pathway-specific signaling, suppresses TGFbeta/activin pathway signaling by interfering with the binding of activin to its type II receptor. Besides canonical SMAD signaling, can activate non-canonical pathways such as p38 mitogen-activated protein kinases/MAPKs. May promote the expression of HAMP, potentially via its interaction with BMP6. This Mus musculus (Mouse) protein is Activin receptor type-1 (Acvr1).